The chain runs to 251 residues: Tryptophan synthase alpha chain (251 aa).

Catalysis depends on proton acceptor residues glutamate 36 and aspartate 47.

This sequence belongs to the TrpA family. As to quaternary structure, tetramer of two alpha and two beta chains.

It catalyses the reaction (1S,2R)-1-C-(indol-3-yl)glycerol 3-phosphate + L-serine = D-glyceraldehyde 3-phosphate + L-tryptophan + H2O. The protein operates within amino-acid biosynthesis; L-tryptophan biosynthesis; L-tryptophan from chorismate: step 5/5. Its function is as follows. The alpha subunit is responsible for the aldol cleavage of indoleglycerol phosphate to indole and glyceraldehyde 3-phosphate. This is Tryptophan synthase alpha chain from Thermococcus kodakarensis (strain ATCC BAA-918 / JCM 12380 / KOD1) (Pyrococcus kodakaraensis (strain KOD1)).